We begin with the raw amino-acid sequence, 192 residues long: Adenylate kinase (192 aa).

10–18 (GVPGVGGTT) contributes to the ATP binding site.

The protein belongs to the archaeal adenylate kinase family. Monomer.

It is found in the cytoplasm. It catalyses the reaction AMP + ATP = 2 ADP. The polypeptide is Adenylate kinase (Methanococcus maripaludis (strain C6 / ATCC BAA-1332)).